The sequence spans 217 residues: Probable ribonuclease P protein subunit 1 (217 aa).

The protein belongs to the eukaryotic/archaeal RNase P protein component 1 family.

It localises to the nucleus. The protein resides in the nucleolus. It carries out the reaction Endonucleolytic cleavage of RNA, removing 5'-extranucleotides from tRNA precursor.. Functionally, part of ribonuclease P, a protein complex that generates mature tRNA molecules by cleaving their 5'-ends. The polypeptide is Probable ribonuclease P protein subunit 1 (Schizosaccharomyces pombe (strain 972 / ATCC 24843) (Fission yeast)).